The chain runs to 557 residues: Syntaxin-binding protein 4 (557 aa).

Phosphoserine occurs at positions 10 and 12. In terms of domain architecture, PDZ spans 19 to 105 (AFRVITVTKE…RSESPWEIAF (87 aa)). Phosphoserine; by PKB/AKT2 is present on Ser99. Residues 142 to 154 (PSETLLPKTSSTP) are compositionally biased toward low complexity. Residues 142–214 (PSETLLPKTS…SGPQGKISLN (73 aa)) are disordered. Over residues 179–194 (SPITSLDNSPADTSNA) the composition is skewed to polar residues. Residue Ser216 is modified to Phosphoserine. Residues 298–408 (ADEVGKLRQE…NKESVQDLRK (111 aa)) adopt a coiled-coil conformation. Ser467 is subject to Phosphoserine. Residues 500-533 (DCLPYGWEEAYTADGIKYFINHVTQTTSWIHPVM) form the WW domain.

In terms of assembly, interacts with STX4A. Post-translationally, phosphorylated on Ser-99 by PKB/AKT2 after insulin treatment. Phosphorylation on Ser-99 abolishes the interaction with STX4A. As to expression, detected in skeletal muscle, heart, testis, adipocytes and pancreatic islet cells.

It is found in the cytoplasm. Plays a role in the translocation of transport vesicles from the cytoplasm to the plasma membrane. Inhibits the translocation of SLC2A4 from intracellular vesicles to the plasma membrane by STX4A binding and preventing the interaction between STX4A and VAMP2. Stimulation with insulin disrupts the interaction with STX4A, leading to increased levels of SLC2A4 at the plasma membrane. May also play a role in the regulation of insulin release by pancreatic beta cells after stimulation by glucose. The sequence is that of Syntaxin-binding protein 4 (Stxbp4) from Mus musculus (Mouse).